Reading from the N-terminus, the 192-residue chain is Adenylate kinase (192 aa).

12–17 (GSGKTT) lines the ATP pocket. The tract at residues 34-63 (STGDLLRAEVASGSELGQTIKSYIDNGNLV) is NMP. AMP is bound by residues threonine 35, arginine 40, 61 to 63 (NLV), 88 to 91 (GFPR), and glutamine 95. An LID region spans residues 130-136 (GRARGAD). An ATP-binding site is contributed by arginine 131. Residues arginine 133 and arginine 145 each contribute to the AMP site. Arginine 173 is a binding site for ATP.

This sequence belongs to the adenylate kinase family. Monomer.

The protein localises to the cytoplasm. It carries out the reaction AMP + ATP = 2 ADP. The protein operates within purine metabolism; AMP biosynthesis via salvage pathway; AMP from ADP: step 1/1. In terms of biological role, catalyzes the reversible transfer of the terminal phosphate group between ATP and AMP. Plays an important role in cellular energy homeostasis and in adenine nucleotide metabolism. The sequence is that of Adenylate kinase from Nautilia profundicola (strain ATCC BAA-1463 / DSM 18972 / AmH).